The sequence spans 390 residues: GTPase Obg (390 aa).

Positions 1–159 (MKFVDEASIL…RELLLELMLL (159 aa)) constitute an Obg domain. The tract at residues 127–147 (NTRFKSSVNRTPRQKTNGTPG) is disordered. A compositionally biased stretch (polar residues) spans 129–145 (RFKSSVNRTPRQKTNGT). The OBG-type G domain maps to 160–333 (ADVGMLGMPN…LCWDVMTFIL (174 aa)). Residues 166–173 (GMPNAGKS), 191–195 (FTTLV), 213–216 (DIPG), 283–286 (NKID), and 314–316 (SAA) contribute to the GTP site. The Mg(2+) site is built by serine 173 and threonine 193.

It belongs to the TRAFAC class OBG-HflX-like GTPase superfamily. OBG GTPase family. In terms of assembly, monomer. Mg(2+) serves as cofactor.

It localises to the cytoplasm. Its function is as follows. An essential GTPase which binds GTP, GDP and possibly (p)ppGpp with moderate affinity, with high nucleotide exchange rates and a fairly low GTP hydrolysis rate. Plays a role in control of the cell cycle, stress response, ribosome biogenesis and in those bacteria that undergo differentiation, in morphogenesis control. This Shigella sonnei (strain Ss046) protein is GTPase Obg.